A 980-amino-acid polypeptide reads, in one-letter code: Protein translocase subunit SecA (980 aa).

ATP is bound by residues Gln109, 127–131, and Asp529; that span reads GEGKT. A disordered region spans residues 954–980; sequence QKIGRNDPCPCGSGKKYKHCHGKDNPQ. The Zn(2+) site is built by Cys962, Cys964, Cys973, and His974.

It belongs to the SecA family. Monomer and homodimer. Part of the essential Sec protein translocation apparatus which comprises SecA, SecYEG and auxiliary proteins SecDF. Other proteins may also be involved. Zn(2+) serves as cofactor.

It localises to the cell inner membrane. The protein resides in the cytoplasm. It carries out the reaction ATP + H2O + cellular proteinSide 1 = ADP + phosphate + cellular proteinSide 2.. Part of the Sec protein translocase complex. Interacts with the SecYEG preprotein conducting channel. Has a central role in coupling the hydrolysis of ATP to the transfer of proteins into and across the cell membrane, serving as an ATP-driven molecular motor driving the stepwise translocation of polypeptide chains across the membrane. This chain is Protein translocase subunit SecA, found in Brachyspira hyodysenteriae (strain ATCC 49526 / WA1).